The chain runs to 447 residues: GTPase Der (447 aa).

2 consecutive EngA-type G domains span residues 2–166 (YRVA…PEYE) and 183–358 (IKVA…NQSW). GTP-binding positions include 8-15 (GRPNVGKS), 55-59 (DTGGY), 118-121 (NKID), 189-196 (GKPNAGKS), 236-240 (DTAGL), and 301-304 (NKID). Residues 359 to 443 (KRVGTGQLNR…PIKLLLRGKE (85 aa)) enclose the KH-like domain.

Belongs to the TRAFAC class TrmE-Era-EngA-EngB-Septin-like GTPase superfamily. EngA (Der) GTPase family. Associates with the 50S ribosomal subunit.

In terms of biological role, GTPase that plays an essential role in the late steps of ribosome biogenesis. In Persephonella marina (strain DSM 14350 / EX-H1), this protein is GTPase Der.